The following is a 96-amino-acid chain: Co-chaperonin GroES (96 aa).

The protein belongs to the GroES chaperonin family. Heptamer of 7 subunits arranged in a ring. Interacts with the chaperonin GroEL.

The protein localises to the cytoplasm. Functionally, together with the chaperonin GroEL, plays an essential role in assisting protein folding. The GroEL-GroES system forms a nano-cage that allows encapsulation of the non-native substrate proteins and provides a physical environment optimized to promote and accelerate protein folding. GroES binds to the apical surface of the GroEL ring, thereby capping the opening of the GroEL channel. The sequence is that of Co-chaperonin GroES from Shewanella oneidensis (strain ATCC 700550 / JCM 31522 / CIP 106686 / LMG 19005 / NCIMB 14063 / MR-1).